The primary structure comprises 251 residues: UPF0309 protein SCO4393 (251 aa).

Residues 36-220 (LADTVQNGGR…AATLADRGIE (185 aa)) enclose the SIS domain.

Belongs to the UPF0309 family.

The sequence is that of UPF0309 protein SCO4393 from Streptomyces coelicolor (strain ATCC BAA-471 / A3(2) / M145).